A 418-amino-acid polypeptide reads, in one-letter code: MSEQQEQEQSDKQKYEFRKVIEELKGYQGSGTQLVSIYIPEGKLISDVVAHVTQEHSEASNIKSKDTRTAVQDALTSIKDRLRYYDVRPPDNGLVVFSGAFDTGGGRTDMVTKVLESPPDPIESFRYHCDSEFLTEPLEHMLADKGLFGLIVLDRREANVGWLKGKRVEPVKSASSLVPGKQRKGGQSAQRFARLRLEAIDNFYQEVAGMANDLFVADRHEIDGILVGGPSPTKDEFLDGDYLHHELQDMVLGKFDVAYTDESGLYDLVDAADDVLAEHEMLRDKELMEDFFKQLHNGDKATYGFDQTRQNLNMGAVEQLLISEDLRKDVVAYTCENGHDEYDLINSSAGTDDHECSRCGATVDADDGEREDAIDHLMELADQRGTETVFISTDFEKGEQLLTAFGGVAGLLRYSTGV.

Belongs to the eukaryotic release factor 1 family. Heterodimer of two subunits, one of which binds GTP.

It localises to the cytoplasm. Directs the termination of nascent peptide synthesis (translation) in response to the termination codons UAA, UAG and UGA. The chain is Peptide chain release factor subunit 1 from Haloarcula marismortui (strain ATCC 43049 / DSM 3752 / JCM 8966 / VKM B-1809) (Halobacterium marismortui).